The chain runs to 466 residues: Cysteine--tRNA ligase (466 aa).

C29 lines the Zn(2+) pocket. The 'HIGH' region motif lies at 31–41 (PTVYNYIHIGN). Zn(2+) is bound by residues C209, H234, and E238. The 'KMSKS' region motif lies at 266–270 (KMSKS). K269 contacts ATP.

This sequence belongs to the class-I aminoacyl-tRNA synthetase family. Monomer. Zn(2+) serves as cofactor.

The protein localises to the cytoplasm. The enzyme catalyses tRNA(Cys) + L-cysteine + ATP = L-cysteinyl-tRNA(Cys) + AMP + diphosphate. The chain is Cysteine--tRNA ligase from Lysinibacillus sphaericus (strain C3-41).